Here is a 215-residue protein sequence, read N- to C-terminus: Protein Thf1 (215 aa).

Residues 188-209 adopt a coiled-coil conformation; that stretch reads IELVQETIAAERRKKERRQAEQ.

Belongs to the THF1 family.

Functionally, may be involved in photosynthetic membrane biogenesis. The protein is Protein Thf1 of Synechococcus sp. (strain CC9902).